The following is an 825-amino-acid chain: Cytosolic phospholipase A2 delta (825 aa).

A C2 domain is found at 14–133 (SPERLHGHPY…LPGQLLQKTF (120 aa)). Ca(2+) contacts are provided by aspartate 47, aspartate 53, aspartate 103, aspartate 105, and aspartate 111. The PLA2c domain occupies 281-825 (DCCPKELSVR…SETRPLGVKT (545 aa)). Residue 339–340 (GG) participates in substrate binding. Serine 370 functions as the Nucleophile in the catalytic mechanism. Catalysis depends on aspartate 654, which acts as the Proton acceptor.

The cofactor is Ca(2+). As to expression, weakly or not expressed in most tissues. Detected in placenta of 17.5 dpc embryos.

It localises to the cytoplasm. The protein localises to the cytosol. Its subcellular location is the membrane. It catalyses the reaction a 1,2-diacyl-sn-glycero-3-phosphocholine + H2O = a 1-acyl-sn-glycero-3-phosphocholine + a fatty acid + H(+). The catalysed reaction is 1-hexadecanoyl-2-(5Z,8Z,11Z,14Z-eicosatetraenoyl)-sn-glycero-3-phosphocholine + H2O = 1-hexadecanoyl-sn-glycero-3-phosphocholine + (5Z,8Z,11Z,14Z)-eicosatetraenoate + H(+). It carries out the reaction 1-hexadecanoyl-2-(9Z,12Z-octadecadienoyl)-sn-glycero-3-phosphocholine + H2O = (9Z,12Z)-octadecadienoate + 1-hexadecanoyl-sn-glycero-3-phosphocholine + H(+). The enzyme catalyses 1-hexadecanoyl-2-(9Z-octadecenoyl)-sn-glycero-3-phosphocholine + H2O = 1-hexadecanoyl-sn-glycero-3-phosphocholine + (9Z)-octadecenoate + H(+). It catalyses the reaction 1-hexadecanoyl-2-(5Z,8Z,11Z,14Z-eicosatetraenoyl)-sn-glycero-3-phosphoethanolamine + H2O = 1-hexadecanoyl-sn-glycero-3-phosphoethanolamine + (5Z,8Z,11Z,14Z)-eicosatetraenoate + H(+). The catalysed reaction is 1-hexadecanoyl-2-(9Z,12Z-octadecadienoyl)-sn-glycero-3-phosphoethanolamine + H2O = 1-hexadecanoyl-sn-glycero-3-phosphoethanolamine + (9Z,12Z)-octadecadienoate + H(+). It carries out the reaction 1-hexadecanoyl-sn-glycero-3-phosphocholine + H2O = sn-glycerol 3-phosphocholine + hexadecanoate + H(+). It participates in lipid metabolism; fatty acid metabolism. Stimulated by cytosolic Ca(2+). Functionally, calcium-dependent phospholipase A2 that selectively hydrolyzes glycerophospholipids in the sn-2 position. Compared to its human ortholog, may have no preference for the fatty acid found at the sn-2 position. In Mus musculus (Mouse), this protein is Cytosolic phospholipase A2 delta.